We begin with the raw amino-acid sequence, 587 residues long: MEGESVKPSPQPTEQAGDGEKNRRMITVNPAHMGKAFKVMNELRSKRLLCDVMIVAEDVEVEAHRVVLAACSPYFCAMFTGDMSESKAKKIEIKDVDGQTLSKLIDYIYTAEIEVTEENVQVLLPAASLLQLMDVRQNCCDFLQSQLHPTNCLGIRAFADVHTCTDLLQQANAYAEQHFPEVMLGEEFLSLSLDQVCSLISSDKLTVSSEEKVFEAVISWINYEKETRLDHMAKLMEHVRLPLLPRDYLVQTVEEEALIKNNNTCKDFLIEAMKYHLLPLDQRLLIKNPRTKPRTPVSLPKVMIVVGGQAPKAIRSVECYDFEEGRWDQIAELPSRRCRAGVVFMAGHVYAVGGFNGSLRVRTVDVYDGVKDQWTSIASMQERRSTLGAAVLNDLLYAVGGFDGSTGLASVEAYSYKTNEWFFVAPMNTRRSSVGVGVVEGKLYAVGGYDGASRQCLSTVEQYNPATNEWIYVADMSTRRSGAGVGVLSGQLYATGGHDGPLVRKSVEVYDPGTNTWKQVADMNMCRRNAGVCAVNGLLYVVGGDDGSCNLASVEYYNPVTDKWTLLPTNMSTGRSYAGQWVSASGA.

The interval 1-24 (MEGESVKPSPQPTEQAGDGEKNRR) is disordered. A BTB domain is found at 50–117 (CDVMIVAEDV…IYTAEIEVTE (68 aa)). The region spanning 152–254 (CLGIRAFADV…PRDYLVQTVE (103 aa)) is the BACK domain. Thr295 is subject to Phosphothreonine. Kelch repeat units lie at residues 302 to 347 (VMIV…FMAG), 348 to 394 (HVYA…VLND), 396 to 441 (LYAV…VVEG), 442 to 490 (KLYA…VLSG), 491 to 537 (QLYA…AVNG), and 539 to 585 (LYVV…VSAS). A Phosphothreonine modification is found at Thr375. 2 positions are modified to phosphoserine: Ser376 and Ser433.

It belongs to the KLHL3 family. As to quaternary structure, homodimer. Component of the BCR(KLHL3) E3 ubiquitin ligase complex, at least composed of CUL3 and KLHL3 and RBX1. Interacts with CLDN8. Phosphorylation at Ser-433 by PKA or PKC decreases the interaction with WNK1 and WNK4, leading to inhibit their degradation by the BCR(KLHL3) complex. Phosphorylated at Ser-433 by PKC in response to angiotensin II signaling, decreasing ability to promote degradation of WNK1 and WNK4, leading to activation of Na-Cl cotransporter SLC12A3/NCC. Phosphorylation at Ser-433 is increased by insulin. Dephosphorylated at Ser-433 by calcineurin PPP3CA, promoting degradation of WNK1 and WNK4.

The protein localises to the cytoplasm. Its subcellular location is the cytoskeleton. The protein resides in the cytosol. It functions in the pathway protein modification; protein ubiquitination. Functionally, substrate-specific adapter of a BCR (BTB-CUL3-RBX1) E3 ubiquitin ligase complex that acts as a regulator of ion transport in the distal nephron. The BCR(KLHL3) complex acts by mediating ubiquitination and degradation of WNK1 and WNK4, two activators of Na-Cl cotransporter SLC12A3/NCC in distal convoluted tubule cells of kidney, thereby regulating NaCl reabsorption. The BCR(KLHL3) complex also mediates ubiquitination and degradation of WNK3. The BCR(KLHL3) complex also mediates ubiquitination of CLDN8, a tight-junction protein required for paracellular chloride transport in the kidney, leading to its degradation. The chain is Kelch-like protein 3 (Klhl3) from Rattus norvegicus (Rat).